Here is a 549-residue protein sequence, read N- to C-terminus: Chaperonin GroEL (549 aa).

ATP is bound by residues 29-32 (TLGP), lysine 50, 86-90 (DGTTT), glycine 414, 477-479 (NAA), and aspartate 493.

The protein belongs to the chaperonin (HSP60) family. As to quaternary structure, forms a cylinder of 14 subunits composed of two heptameric rings stacked back-to-back. Interacts with the co-chaperonin GroES.

Its subcellular location is the cytoplasm. The enzyme catalyses ATP + H2O + a folded polypeptide = ADP + phosphate + an unfolded polypeptide.. Its function is as follows. Together with its co-chaperonin GroES, plays an essential role in assisting protein folding. The GroEL-GroES system forms a nano-cage that allows encapsulation of the non-native substrate proteins and provides a physical environment optimized to promote and accelerate protein folding. The protein is Chaperonin GroEL of Geotalea uraniireducens (strain Rf4) (Geobacter uraniireducens).